The chain runs to 607 residues: Oligoendopeptidase F homolog (607 aa).

A Zn(2+)-binding site is contributed by H384. The active site involves E385. Residues H388 and H391 each coordinate Zn(2+).

This sequence belongs to the peptidase M3B family. The cofactor is Zn(2+).

In Mycoplasma genitalium (strain ATCC 33530 / DSM 19775 / NCTC 10195 / G37) (Mycoplasmoides genitalium), this protein is Oligoendopeptidase F homolog (pepF).